The following is a 423-amino-acid chain: CinA-like protein (423 aa).

It belongs to the CinA family.

This is CinA-like protein from Desulforapulum autotrophicum (strain ATCC 43914 / DSM 3382 / VKM B-1955 / HRM2) (Desulfobacterium autotrophicum).